A 306-amino-acid polypeptide reads, in one-letter code: Pantothenate kinase (306 aa).

91-98 (GSVAVGKS) is a binding site for ATP.

Belongs to the prokaryotic pantothenate kinase family.

It is found in the cytoplasm. It catalyses the reaction (R)-pantothenate + ATP = (R)-4'-phosphopantothenate + ADP + H(+). It functions in the pathway cofactor biosynthesis; coenzyme A biosynthesis; CoA from (R)-pantothenate: step 1/5. This chain is Pantothenate kinase, found in Streptococcus pyogenes serotype M5 (strain Manfredo).